Here is a 408-residue protein sequence, read N- to C-terminus: Acetate kinase (408 aa).

Residue asparagine 7 coordinates Mg(2+). Position 14 (lysine 14) interacts with ATP. Arginine 91 contributes to the substrate binding site. Aspartate 148 acts as the Proton donor/acceptor in catalysis. ATP contacts are provided by residues 208 to 212 (HLGNG), 283 to 285 (DFR), and 331 to 335 (GIGEN). Glutamate 384 is a binding site for Mg(2+).

Belongs to the acetokinase family. Homodimer. It depends on Mg(2+) as a cofactor. Mn(2+) serves as cofactor.

It localises to the cytoplasm. It carries out the reaction acetate + ATP = acetyl phosphate + ADP. Its pathway is metabolic intermediate biosynthesis; acetyl-CoA biosynthesis; acetyl-CoA from acetate: step 1/2. Catalyzes the formation of acetyl phosphate from acetate and ATP. Can also catalyze the reverse reaction. This chain is Acetate kinase, found in Methanosarcina mazei (strain ATCC BAA-159 / DSM 3647 / Goe1 / Go1 / JCM 11833 / OCM 88) (Methanosarcina frisia).